The sequence spans 591 residues: uncharacterized protein (591 aa).

4 consecutive transmembrane segments (helical) span residues 389–409, 411–431, 538–558, and 571–591; these read VYLG…SALI, GGSP…GGIL, GILP…FALS, and PIIS…FNLL.

Its subcellular location is the membrane. This is an uncharacterized protein from Mycoplasma (Bacteriophage L2).